Reading from the N-terminus, the 2346-residue chain is Nucleoprotein TPR (2346 aa).

Coiled-coil stretches lie at residues 38-190, 217-366, 395-493, and 565-596; these read DEYC…HKEI, QLQS…NLES, YAKS…SRQV, and KMLLEQSKNHIRKLDARFAELEDLLTQKNNTV. The segment at 622-649 is disordered; that stretch reads VDLDDSNLEPNDSALDTSEQPAANFEES. Over residues 629 to 642 the composition is skewed to polar residues; it reads LEPNDSALDTSEQP. 2 coiled-coil regions span residues 643 to 1158 and 1196 to 1247; these read AANF…IEAL and EEGR…DELN. The tract at residues 1187-1655 is interacts with Mad1; the sequence is LNASGLTAAE…SPRTANVKPM (469 aa). Thr-1259, Thr-1302, Thr-1338, and Thr-1390 each carry phosphothreonine. Coiled coils occupy residues 1281–1536 and 1579–1627; these read TDSN…KRTE and SYDE…GSQQ. 2 stretches are compositionally biased toward polar residues: residues 1621–1649 and 1657–1667; these read RQLGSQQSTKPSTSSVAEKGNISESSPRT and GSATVQQSATV. Disordered stretches follow at residues 1621 to 1677, 1695 to 1768, and 1821 to 2346; these read RQLG…ETPL, PTSQ…YMPS, and SPRV…GRFP. Residues 1702 to 1722 are compositionally biased toward low complexity; it reads AGSSTSTSSSSSSSSTSTTSA. Residues 1738–1747 show a composition bias toward polar residues; the sequence is PQQQVHTTGS. Low complexity-rich tracts occupy residues 1752–1761 and 1827–1878; these read SMASSSPTSS and SSSS…PSSS. Polar residues predominate over residues 1879-1891; it reads NVTTTQAGCSSQG. Residues 1953-2023 show a composition bias toward acidic residues; sequence QEDDIQVVDS…QDNNEVDIEV (71 aa). The segment covering 2028-2080 has biased composition (polar residues); the sequence is MQAQEESQSLDNQAIATASASTQENNQSQAITSGSGESSNPVTLPQAEASNWK. The segment covering 2082–2091 has biased composition (low complexity); the sequence is AAASTSTAAA. Polar residues-rich tracts occupy residues 2097 to 2110 and 2142 to 2159; these read SVEIVSSPQVSNFC and GAASASSPQKQSEAGESS. A compositionally biased stretch (basic and acidic residues) spans 2165 to 2184; sequence KAADDGGDHADGTDNAREAD. Composition is skewed to polar residues over residues 2193–2223 and 2302–2322; these read ATGQGEDSQPLGNDNPNVGTSQSEVSHNQAN and RDTSPGNIQQNQMSANNNRFA. The span at 2323 to 2332 shows a compositional bias: basic residues; the sequence is QRTRNRRPIR.

Belongs to the TPR family. In terms of assembly, part of the nuclear pore complex (NPC). Associates with male-specific lethal (MSL) histone acetyltransferase complex. Interacts with Mad2; the interaction is required for efficient recruitment of Mad2 to unattached kinetochore and occurs in a microtubule-independent manner. Interacts with Mad1 (N-terminus). Interacts with Chro, east and Asator; the interaction is part of a macromolecular complex forming the spindle matrix during mitosis. Interacts with Nup98. In males, interacts with histone acetyltransferase mof. In terms of processing, mps1-mediated phosphorylation disrupts interaction with Mad1 during mitosis. In terms of tissue distribution, expressed in salivary glands, fat body, tracheal tube, esophageal tube and anterior ejaculatory duct (at protein level).

The protein resides in the nucleus. The protein localises to the nucleus matrix. It is found in the nucleus lamina. Its subcellular location is the nucleus envelope. It localises to the nucleus membrane. The protein resides in the nuclear pore complex. The protein localises to the cytoplasm. It is found in the cytoskeleton. Its subcellular location is the spindle. It localises to the chromosome. The protein resides in the centromere. The protein localises to the kinetochore. It is found in the midbody. Functionally, component of the nuclear pore complex (NPC), a complex required for the trafficking across the nuclear envelope. Functions as a scaffolding element in the nuclear phase of the NPC. Plays a role in chromosomal organization and gene expression regulation; stimulates transcription by promoting the formation of an open chromatin environment. Binds chromatin to nucleoporin-associated regions (NARs) that define transcriptionally active regions of the genome. Associates with extended chromosomal regions that alternate between domains of high density binding with those of low occupancy. Preferentially binds to NARs of the male X chromosome. In males, together with Nup153, required for the localization of the male-specific lethal (MSL) histone acetyltransferase complex to the X chromosome and therefore for the transcription of dosage compensation genes. In males, restrains dosage-compensated expression at the level of nascent transcription probably by interacting with the MSL complex and by modulating RNA Polymerase II phosphorylation status and activity. During mitosis forms a gel-like spindle matrix complex together with Skeletor (Skel), Chro, east, and Asator embedding the microtubule spindle apparatus. During interphase localizes Mad1 to the nuclear pore complex and thereby might act as a scaffold to assemble the Mad1-C-Mad2 complex, a heterotetramer that catalyzes the structural conversion of open-Mad2 (O-Mad2) into closed-Mad2 (C-Mad2) which is essential for spindle-assembly checkpoint (SAC). During the metaphase-anaphase transition and before chromosome congression, is phosphorylated by Msp-1; this modification releases Mad1 from the nuclear pore complex and thereby promotes assembly of SAC ensuring a timely and effective recruitment of spindle checkpoint proteins like Mad1, Mad2 and Mps1 to unattached kinetochores (KT). In testes, has a role in stem cell asymmetric division and maintenance via regulation of mitotic spindle assembly checkpoint (SAC) complex. The chain is Nucleoprotein TPR from Drosophila melanogaster (Fruit fly).